Reading from the N-terminus, the 423-residue chain is Gamma-glutamyl phosphate reductase (423 aa).

The protein belongs to the gamma-glutamyl phosphate reductase family.

The protein localises to the cytoplasm. The enzyme catalyses L-glutamate 5-semialdehyde + phosphate + NADP(+) = L-glutamyl 5-phosphate + NADPH + H(+). It participates in amino-acid biosynthesis; L-proline biosynthesis; L-glutamate 5-semialdehyde from L-glutamate: step 2/2. Catalyzes the NADPH-dependent reduction of L-glutamate 5-phosphate into L-glutamate 5-semialdehyde and phosphate. The product spontaneously undergoes cyclization to form 1-pyrroline-5-carboxylate. The protein is Gamma-glutamyl phosphate reductase of Pseudomonas putida (strain W619).